Here is a 150-residue protein sequence, read N- to C-terminus: Peptide deformylase 2 (150 aa).

Positions 89 and 131 each coordinate Fe cation. Glu-132 is a catalytic residue. His-135 is a binding site for Fe cation.

The protein belongs to the polypeptide deformylase family. Requires Fe(2+) as cofactor.

The enzyme catalyses N-terminal N-formyl-L-methionyl-[peptide] + H2O = N-terminal L-methionyl-[peptide] + formate. In terms of biological role, removes the formyl group from the N-terminal Met of newly synthesized proteins. Requires at least a dipeptide for an efficient rate of reaction. N-terminal L-methionine is a prerequisite for activity but the enzyme has broad specificity at other positions. This Clostridium acetobutylicum (strain ATCC 824 / DSM 792 / JCM 1419 / IAM 19013 / LMG 5710 / NBRC 13948 / NRRL B-527 / VKM B-1787 / 2291 / W) protein is Peptide deformylase 2.